Consider the following 768-residue polypeptide: Cullin-3 (768 aa).

The residue at position 2 (serine 2) is an N-acetylserine. The tract at residues 2–41 (SNLSKGTGSRKDTKMRIRAFPMTMDEKYVNSIWDLLKNAI) is interaction with KLHL18. Serine 585 carries the post-translational modification Phosphoserine. Residues 677-698 (VAAKQGESDPERKETRQKVDDD) are disordered. Residues 682 to 698 (GESDPERKETRQKVDDD) are compositionally biased toward basic and acidic residues. Positions 698-760 (DRKHEIEAAI…REYLARTPED (63 aa)) constitute a Cullin neddylation domain. Residue lysine 712 forms a Glycyl lysine isopeptide (Lys-Gly) (interchain with G-Cter in NEDD8) linkage.

The protein belongs to the cullin family. Forms neddylation-dependent homodimers. Component of multiple BCR (BTB-CUL3-RBX1) E3 ubiquitin-protein ligase complexes formed of CUL3, RBX1 and a variable BTB domain-containing protein acting as both, adapter to cullin and substrate recognition subunit. The BCR complex may be active as a heterodimeric complex, in which NEDD8, covalently attached to one CUL3 molecule, binds to the C-terminus of a second CUL3 molecule. Interacts with RBX1, RNF7, CYCE and TIP120A/CAND1. Part of the BCR(SPOP) containing SPOP, and of BCR containing homodimeric SPOPL or the heterodimer formed by SPOP and SPOPL. Part of the probable BCR(KLHL9-KLHL13) complex with BTB domain proteins KLHL9 and KLHL13. Part of the BCR(KLHL41) complex containing KLHL41. Component of the BCR(KLHL12) E3 ubiquitin ligase complex, at least composed of CUL3 and KLHL12 and RBX1. Component of the BCR(KLHL3) E3 ubiquitin ligase complex, at least composed of CUL3 and KLHL3 and RBX1. Part of the BCR(ENC1) complex containing ENC1. Part of a complex consisting of BMI1/PCGF4, CUL3 and SPOP. Part of a complex consisting of BRMS1, CUL3 and SPOP. Component of the BCR(KLHL21) E3 ubiquitin ligase complex, at least composed of CUL3, KLHL21 and RBX1. Component of the BCR(KLHL22) E3 ubiquitin ligase complex, at least composed of CUL3, KLHL22 and RBX1. Component of the BCR(KLHL25) E3 ubiquitin ligase complex, at least composed of CUL3, KLHL25 and RBX1. Part of a complex consisting of MACROH2A1, CUL3 and SPOP. Component of the BCR(KLHL42) E3 ubiquitin ligase complex, at least composed of CUL3 and KLHL42. Component of the BCR(KBTBD8) E3 ubiquitin ligase complex, at least composed of CUL3, KBTBD8 and RBX1. Interacts with KLHL42 (via the BTB domain). Interacts with KATNA1; the interaction is enhanced by KLHL42. Interacts with KCTD5, KLHL9, KLHL11, KLHL13, GAN, ZBTB16, KLHL3, KLHL15, KLHL20, KLHL36, GMCL2, BTBD1. Part of a complex that contains CUL3, RBX1 and GAN. Interacts (via BTB domain) with KLHL17; the interaction regulates surface GRIK2 expression. Interacts with KCTD7. Part of the BCR(GAN) complex containing GAN. Part of the BCR(KEAP1) complex containing KEAP1. vInteracts with KLHL10. Interacts with KAT5 and ATF2. Interacts with KCTD17 in the BCR(KCTD17) E3 ubiquitin ligase complex, at least composed of CUL3, KCTD17 and RBX1. Interacts (when neddylated) with ARIH1; leading to activate the E3 ligase activity of ARIH1. Interacts with COPS9. Interacts with PPP2R5B; this interaction is indirect and mediated through KLHL15-binding and leads to PPP2R5B proteasomal degradation. Interacts with RBBP8/CtIP; this interaction is indirect and mediated through KLHL15-binding and leads to RBBP8 proteasomal degradation. Interacts with KLHL24 in the BCR(KLHL24) E3 ubiquitin ligase complex, composed of CUL3, RBX1 and KLHL24. Interacts with RHOBTB2. Interacts (via BTB domain) with KLHL17; the interaction regulates surface GRIK2 expression. Interacts with AURKA and KLHL18 (via BTB domain). Interacts (unneddylated form) with DCUN1D1, DCUN1D2, DCUN1D3, DCUN1D4 and DCUN1D5; these interactions promote the cullin neddylation. Component of a BCR3 (BTB-CUL3-RBX1) E3 ubiquitin ligase complex, also named Cul3-RING ubiquitin ligase complex CUL3(KBTBD6/7), composed of CUL3, RBX1, KBTBD6 and KBTBD7. Component of the BCR(KBTBD2) E3 ubiquitin ligase complex, at least composed of CUL3, KBTBD2 and RBX1. Interacts with KBTBD2 (via the BTB domain). Component of the BCR(KBTBD4) E3 ubiquitin ligase complex, at least composed of CUL3, KBTBD4 and RBX1. Post-translationally, neddylated. Attachment of NEDD8 is required for the E3 ubiquitin-protein ligase activity of the BCR complex. Deneddylated via its interaction with the COP9 signalosome (CSN) complex.

It is found in the nucleus. Its subcellular location is the golgi apparatus. The protein localises to the cell projection. It localises to the cilium. The protein resides in the flagellum. It is found in the cytoplasm. Its subcellular location is the cytoskeleton. The protein localises to the spindle. It localises to the microtubule organizing center. The protein resides in the centrosome. It is found in the spindle pole. The protein operates within protein modification; protein ubiquitination. Core component of multiple cullin-RING-based BCR (BTB-CUL3-RBX1) E3 ubiquitin-protein ligase complexes which mediate the ubiquitination and subsequent proteasomal degradation of target proteins. BCR complexes and ARIH1 collaborate in tandem to mediate ubiquitination of target proteins. As a scaffold protein may contribute to catalysis through positioning of the substrate and the ubiquitin-conjugating enzyme. The E3 ubiquitin-protein ligase activity of the complex is dependent on the neddylation of the cullin subunit and is inhibited by the association of the deneddylated cullin subunit with TIP120A/CAND1. The functional specificity of the BCR complex depends on the BTB domain-containing protein as the substrate recognition component. BCR(KLHL42) is involved in ubiquitination of KATNA1. BCR(SPOP) is involved in ubiquitination of BMI1/PCGF4, BRMS1, MACROH2A1 and DAXX, GLI2 and GLI3. Can also form a cullin-RING-based BCR (BTB-CUL3-RBX1) E3 ubiquitin-protein ligase complex containing homodimeric SPOPL or the heterodimer formed by SPOP and SPOPL; these complexes have lower ubiquitin ligase activity. BCR(KLHL9-KLHL13) controls the dynamic behavior of AURKB on mitotic chromosomes and thereby coordinates faithful mitotic progression and completion of cytokinesis. BCR(KLHL12) is involved in ER-Golgi transport by regulating the size of COPII coats, thereby playing a key role in collagen export, which is required for embryonic stem (ES) cells division: BCR(KLHL12) acts by mediating monoubiquitination of SEC31 (SEC31A or SEC31B). BCR(KLHL3) acts as a regulator of ion transport in the distal nephron; by mediating ubiquitination of WNK4. The BCR(KLHL20) E3 ubiquitin ligase complex is involved in interferon response and anterograde Golgi to endosome transport: it mediates both ubiquitination leading to degradation and 'Lys-33'-linked ubiquitination. The BCR(KLHL21) E3 ubiquitin ligase complex regulates localization of the chromosomal passenger complex (CPC) from chromosomes to the spindle midzone in anaphase and mediates the ubiquitination of AURKB. The BCR(KLHL22) ubiquitin ligase complex mediates monoubiquitination of PLK1, leading to PLK1 dissociation from phosphoreceptor proteins and subsequent removal from kinetochores, allowing silencing of the spindle assembly checkpoint (SAC) and chromosome segregation. The BCR(KLHL22) ubiquitin ligase complex is also responsible for the amino acid-stimulated 'Lys-48' polyubiquitination and proteasomal degradation of DEPDC5. Through the degradation of DEPDC5, releases the GATOR1 complex-mediated inhibition of the TORC1 pathway. The BCR(KLHL25) ubiquitin ligase complex is involved in translational homeostasis by mediating ubiquitination and subsequent degradation of hypophosphorylated EIF4EBP1 (4E-BP1). The BCR(KLHL25) ubiquitin ligase complex is also involved in lipid synthesis by mediating ubiquitination and degradation of ACLY. The BCR(KBTBD8) complex acts by mediating monoubiquitination of NOLC1 and TCOF1, leading to remodel the translational program of differentiating cells in favor of neural crest specification. Involved in ubiquitination of cyclin E and of cyclin D1 (in vitro) thus involved in regulation of G1/S transition. Involved in the ubiquitination of KEAP1, ENC1 and KLHL41. In concert with ATF2 and RBX1, promotes degradation of KAT5 thereby attenuating its ability to acetylate and activate ATM. The BCR(KCTD17) E3 ubiquitin ligase complex mediates ubiquitination and degradation of TCHP, a down-regulator of cilium assembly, thereby inducing ciliogenesis. The BCR(KLHL24) E3 ubiquitin ligase complex mediates ubiquitination of KRT14, controls KRT14 levels during keratinocytes differentiation, and is essential for skin integrity. The BCR(KLHL18) E3 ubiquitin ligase complex mediates the ubiquitination of AURKA leading to its activation at the centrosome which is required for initiating mitotic entry. The BCR(KEAP1) E3 ubiquitin ligase complex acts as a key sensor of oxidative and electrophilic stress by mediating ubiquitination and degradation of NFE2L2/NRF2, a transcription factor regulating expression of many cytoprotective genes. As part of the CUL3(KBTBD6/7) E3 ubiquitin ligase complex functions mediates 'Lys-48' ubiquitination and proteasomal degradation of TIAM1. By controlling the ubiquitination of that RAC1 guanine exchange factors (GEF), regulates RAC1 signal transduction and downstream biological processes including the organization of the cytoskeleton, cell migration and cell proliferation. The BCR(KBTBD4) E3 ubiquitin ligase complex targets CoREST corepressor complex components RCOR1, KDM1A/LSD1 and HDAC2 for proteasomal degradation with RCOR1 likely to be the primary target while degradation of KDM1A and HDAC2 is likely due to their association with RCOR1. It also targets RCOR3, MIER2 and MIER3 for proteasomal degradation as well as associated proteins ZNF217 and RREB1 with degradation being dependent on the presence of an ELM2 domain in the target proteins. The BCR(ARMC5) complex mediates premature transcription termination of transcripts that are unfavorably configured for transcriptional elongation by mediating ubiquitination of Pol II subunit POLR2A. Required for 'Lys-63'-linked ubiquitination of large ribosomal subunit protein MRPL12. This is Cullin-3 (Cul3) from Rattus norvegicus (Rat).